Reading from the N-terminus, the 304-residue chain is UDP-3-O-acyl-N-acetylglucosamine deacetylase (304 aa).

The Zn(2+) site is built by H78, H237, and D241. Catalysis depends on H264, which acts as the Proton donor.

Belongs to the LpxC family. Zn(2+) serves as cofactor.

It catalyses the reaction a UDP-3-O-[(3R)-3-hydroxyacyl]-N-acetyl-alpha-D-glucosamine + H2O = a UDP-3-O-[(3R)-3-hydroxyacyl]-alpha-D-glucosamine + acetate. It participates in glycolipid biosynthesis; lipid IV(A) biosynthesis; lipid IV(A) from (3R)-3-hydroxytetradecanoyl-[acyl-carrier-protein] and UDP-N-acetyl-alpha-D-glucosamine: step 2/6. Catalyzes the hydrolysis of UDP-3-O-myristoyl-N-acetylglucosamine to form UDP-3-O-myristoylglucosamine and acetate, the committed step in lipid A biosynthesis. The sequence is that of UDP-3-O-acyl-N-acetylglucosamine deacetylase from Acidithiobacillus ferrooxidans (strain ATCC 53993 / BNL-5-31) (Leptospirillum ferrooxidans (ATCC 53993)).